We begin with the raw amino-acid sequence, 121 residues long: Large ribosomal subunit protein uL14 (121 aa).

Belongs to the universal ribosomal protein uL14 family. In terms of assembly, part of the 50S ribosomal subunit. Forms a cluster with proteins L3 and L19. In the 70S ribosome, L14 and L19 interact and together make contacts with the 16S rRNA in bridges B5 and B8.

Binds to 23S rRNA. Forms part of two intersubunit bridges in the 70S ribosome. This chain is Large ribosomal subunit protein uL14, found in Legionella pneumophila (strain Paris).